A 935-amino-acid chain; its full sequence is GPI ethanolamine phosphate transferase 1 (935 aa).

Over 1–5 the chain is Cytoplasmic; it reads MFGRL. The helical transmembrane segment at 6-26 threads the bilayer; that stretch reads LLLGILFHVVFLKSIFDIYFV. Residues 27 to 449 are Lumenal-facing; it reads TPLIHGMKQY…LQRYDWLLLR (423 aa). N-linked (GlcNAc...) asparagine glycans are attached at residues N86, N134, N315, and N398. A helical transmembrane segment spans residues 450–470; sequence SIVFFGYLSWIGYVICFVFSL. Residues 471-483 lie on the Cytoplasmic side of the membrane; that stretch reads NIEPSSKIVKPVS. The helical transmembrane segment at 484–503 threads the bilayer; the sequence is VVKRVAFNIPFLLICIFFYI. Over 504–509 the chain is Lumenal; that stretch reads QSSPPF. A helical transmembrane segment spans residues 510–530; sequence YYGYALFPTIFLQLIHSIFPN. The Cytoplasmic portion of the chain corresponds to 531 to 547; it reads TKLGFKNFLTVAKQKHG. The helical transmembrane segment at 548–568 threads the bilayer; sequence FSLLKILFISLCILCLLQFIV. The Lumenal segment spans residues 569-576; the sequence is YSYFHREG. Residues 577–597 traverse the membrane as a helical segment; sequence FSVILMGLAAWPWLLHADYAF. At 598 to 600 the chain is on the cytoplasmic side; sequence SHK. The chain crosses the membrane as a helical span at residues 601-621; that stretch reads TISVSWSVLTSLLCFFTILPV. Residues 622 to 626 lie on the Lumenal side of the membrane; sequence NKKES. Residues 627–647 form a helical membrane-spanning segment; sequence LLFIFAGGFAMSVAGVFYILY. The Cytoplasmic segment spans residues 648–663; it reads RRNQAFQYSSTVTNKQ. Residues 664 to 684 traverse the membrane as a helical segment; it reads LVLQVLIIMATVPVTLKIADS. Residues 685–688 lie on the Lumenal side of the membrane; sequence LQRN. Residues 689–709 form a helical membrane-spanning segment; it reads IAIPPILRLVAFGLFITSYII. Over 710-737 the chain is Cytoplasmic; it reads PSHHIRSCKHYFLDRLAILFLTFSPTMC. The helical transmembrane segment at 738–758 threads the bilayer; sequence MLSISFEALFYVVLFITLGLW. Over 759-792 the chain is Lumenal; that stretch reads MELETELQKYTEQLHPEYSRKKDAKFHLSLSHIR. Residues 793–813 traverse the membrane as a helical segment; it reads ISLFFYIFINVAFFGTGNVAS. Over 814–835 the chain is Cytoplasmic; that stretch reads LSTFALDSVKRFIPVFNPVTQG. A helical membrane pass occupies residues 836–856; sequence ALLMYTILVPFIALSAAFGIM. Residues 857–865 lie on the Lumenal side of the membrane; the sequence is NKRLGGIQQ. The chain crosses the membrane as a helical span at residues 866 to 886; that stretch reads VTFFLAVGMADIVTINFFYLV. The Cytoplasmic portion of the chain corresponds to 887–894; sequence KDEGSWKD. A helical membrane pass occupies residues 895 to 915; the sequence is IGVSISHFCISNFLILFITAL. At 916 to 935 the chain is on the lumenal side; the sequence is EHASAILCKNITYTIHEKVN. N925 carries N-linked (GlcNAc...) asparagine glycosylation.

It belongs to the PIGG/PIGN/PIGO family. PIGN subfamily.

It localises to the endoplasmic reticulum membrane. It participates in glycolipid biosynthesis; glycosylphosphatidylinositol-anchor biosynthesis. In terms of biological role, ethanolamine phosphate transferase involved in glycosylphosphatidylinositol-anchor biosynthesis. Transfers ethanolamine phosphate to the first alpha-1,4-linked mannose of the glycosylphosphatidylinositol precursor of GPI-anchor. The chain is GPI ethanolamine phosphate transferase 1 (its8) from Schizosaccharomyces pombe (strain 972 / ATCC 24843) (Fission yeast).